Here is a 259-residue protein sequence, read N- to C-terminus: Polycomb group RING finger protein 1 (259 aa).

Residues 45–84 form an RING-type zinc finger; it reads CYLCAGYFIDATTITECLHTFCKSCIVKYLQTSKYCPLCN.

As to quaternary structure, component of a PRC1-like complex.

Its subcellular location is the nucleus. Functionally, component of a Polycomb group (PcG) multiprotein PRC1-like complex, a complex class required to maintain the transcriptionally repressive state of many genes, including Hox genes, throughout development. PcG PRC1 complex acts via chromatin remodeling and modification of histones; it mediates monoubiquitination of histone H2A 'Lys-119', rendering chromatin heritably changed in its expressibility. In Xenopus tropicalis (Western clawed frog), this protein is Polycomb group RING finger protein 1 (pcgf1).